The sequence spans 70 residues: Large ribosomal subunit protein eL38 (70 aa).

Belongs to the eukaryotic ribosomal protein eL38 family.

The chain is Large ribosomal subunit protein eL38 (rpl-38) from Caenorhabditis elegans.